A 51-amino-acid chain; its full sequence is Insulin (51 aa).

3 disulfide bridges follow: Cys-7/Cys-37, Cys-19/Cys-50, and Cys-36/Cys-41.

The protein belongs to the insulin family. As to quaternary structure, heterodimer of a B chain and an A chain linked by two disulfide bonds.

The protein resides in the secreted. Functionally, insulin decreases blood glucose concentration. It increases cell permeability to monosaccharides, amino acids and fatty acids. It accelerates glycolysis, the pentose phosphate cycle, and glycogen synthesis in liver. In Ptyas dhumnades (Big-eyed ratsnake), this protein is Insulin (INS).